A 405-amino-acid chain; its full sequence is Glucose-1-phosphate adenylyltransferase 1 (405 aa).

Alpha-D-glucose 1-phosphate is bound by residues Tyr-96, Gly-161, Glu-176 to Lys-177, and Ser-194.

This sequence belongs to the bacterial/plant glucose-1-phosphate adenylyltransferase family. In terms of assembly, homotetramer.

The enzyme catalyses alpha-D-glucose 1-phosphate + ATP + H(+) = ADP-alpha-D-glucose + diphosphate. It participates in glycan biosynthesis; glycogen biosynthesis. Functionally, involved in the biosynthesis of ADP-glucose, a building block required for the elongation reactions to produce glycogen. Catalyzes the reaction between ATP and alpha-D-glucose 1-phosphate (G1P) to produce pyrophosphate and ADP-Glc. This Vibrio vulnificus (strain CMCP6) protein is Glucose-1-phosphate adenylyltransferase 1.